The following is a 650-amino-acid chain: Phosphatidylinositol-3,5-bisphosphate 3-phosphatase MTMR14 (650 aa).

A disordered region spans residues 1 to 27; sequence MAGARAAAAAASAGSSASSGNQPPQEL. At lysine 194 the chain carries N6-acetyllysine. N-linked (GlcNAc...) asparagine glycosylation occurs at asparagine 226. Catalysis depends on cysteine 330, which acts as the Phosphocysteine intermediate. A 1,2-diacyl-sn-glycero-3-phospho-(1D-myo-inositol-3,5-bisphosphate) contacts are provided by glycine 333, tryptophan 334, aspartate 335, arginine 336, and arginine 382. A 1,2-diacyl-sn-glycero-3-phospho-(1D-myo-inositol-3-phosphate) is bound by residues glycine 333, tryptophan 334, aspartate 335, arginine 336, and arginine 382. Positions 476 to 546 are disordered; it reads AAWRKSHSSS…PRSVDHPLPG (71 aa). At serine 518 the chain carries Phosphoserine. Asparagine 519 carries an N-linked (GlcNAc...) asparagine glycan. 3 positions are modified to phosphoserine: serine 530, serine 580, and serine 624. Omega-N-methylarginine is present on arginine 638.

It belongs to the protein-tyrosine phosphatase family. Non-receptor class myotubularin subfamily. Expressed in various tissues, including heart, skeletal muscle, placenta, liver, lung, kidney and pancreas.

The protein localises to the cytoplasm. The catalysed reaction is a 1,2-diacyl-sn-glycero-3-phospho-(1D-myo-inositol-3,5-bisphosphate) + H2O = a 1,2-diacyl-sn-glycero-3-phospho-(1D-myo-inositol-5-phosphate) + phosphate. It carries out the reaction a 1,2-diacyl-sn-glycero-3-phospho-(1D-myo-inositol-3-phosphate) + H2O = a 1,2-diacyl-sn-glycero-3-phospho-(1D-myo-inositol) + phosphate. Functionally, lipid phosphatase that specifically dephosphorylates the D-3 position of phosphatidylinositol 3-phosphate and phosphatidylinositol 3,5-bisphosphate, generating phosphatidylinositol and phosphatidylinositol 5-phosphate. The chain is Phosphatidylinositol-3,5-bisphosphate 3-phosphatase MTMR14 from Homo sapiens (Human).